The sequence spans 217 residues: Yop proteins translocation protein R (217 aa).

4 helical membrane passes run 11 to 31 (IIVL…TSFV), 53 to 73 (MAMY…VGFA), 157 to 177 (IGFL…NILL), and 181 to 201 (MMMV…FVLL).

It belongs to the FliP/MopC/SpaP family.

It is found in the cell membrane. Component of the yop secretion machinery. May have a role in the negative pathway regulation of yop expression controlled by calcium. The protein is Yop proteins translocation protein R (yscR) of Yersinia pestis.